A 138-amino-acid chain; its full sequence is Large ribosomal subunit protein bL19 (138 aa).

This sequence belongs to the bacterial ribosomal protein bL19 family.

This protein is located at the 30S-50S ribosomal subunit interface and may play a role in the structure and function of the aminoacyl-tRNA binding site. The polypeptide is Large ribosomal subunit protein bL19 (rplS) (Rickettsia prowazekii (strain Madrid E)).